The chain runs to 267 residues: Nus factor SuhB (267 aa).

The Mg(2+) site is built by Glu-67, Asp-84, and Leu-86. Substrate is bound at residue Glu-67. Substrate-binding positions include 86–89, Arg-183, and Asp-212; that span reads LDGT.

Belongs to the inositol monophosphatase superfamily. Homodimer. The rRNA transcription and antitermination complex (rrnTAC) consists of RNA polymerase (RNAP), NusA, NusB, NusE (rpsJ), NusG, SubB, ribosomal protein S4, DNA and precursor rRNA; S4 is more flexible than other subunits. The cofactor is Mg(2+).

Its subcellular location is the cytoplasm. The enzyme catalyses a myo-inositol phosphate + H2O = myo-inositol + phosphate. Its function is as follows. Part of the processive rRNA transcription and antitermination complex (rrnTAC). The complex forms an RNA-chaperone ring around the RNA exit tunnel of RNA polymerase (RNAP). It supports rapid transcription and antitermination of rRNA operons, cotranscriptional rRNA folding, and annealing of distal rRNA regions to allow correct ribosome biogenesis. This subunit may play a central role in organizing the structure. In Vibrio cholerae serotype O1 (strain ATCC 39315 / El Tor Inaba N16961), this protein is Nus factor SuhB.